The chain runs to 156 residues: Succinate dehydrogenase assembly factor 2-A, mitochondrial (156 aa).

The transit peptide at 1-24 directs the protein to the mitochondrion; sequence MLRQFLVSTAVRRVVVPSMAQTRC. The tract at residues 35-62 is disordered; that stretch reads TPGEIVDYDDPPHIPVPEYPSRPDEPLE.

Belongs to the SDHAF2 family. As to quaternary structure, interacts with the flavoprotein subunit within the SDH catalytic dimer.

Its subcellular location is the mitochondrion matrix. Plays an essential role in the assembly of succinate dehydrogenase (SDH), an enzyme complex (also referred to as respiratory complex II) that is a component of both the tricarboxylic acid (TCA) cycle and the mitochondrial electron transport chain, and which couples the oxidation of succinate to fumarate with the reduction of ubiquinone (coenzyme Q) to ubiquinol. Required for flavinylation (covalent attachment of FAD) of the flavoprotein subunit of the SDH catalytic dimer. The polypeptide is Succinate dehydrogenase assembly factor 2-A, mitochondrial (Drosophila ananassae (Fruit fly)).